The sequence spans 657 residues: Translation factor GUF1, mitochondrial (657 aa).

The N-terminal 39 residues, 1-39 (MRGCLQSVKWLTSALRPSQSLASSTRYPRRLLSTSAPRN), are a transit peptide targeting the mitochondrion. The 181-residue stretch at 59-239 (ERFRNFCIVA…TVIEQIPAPV (181 aa)) folds into the tr-type G domain. Residues 121–128 (HQGEDYLL), 185–189 (INKVD), and 239–242 (VGDR) each bind GTP.

The protein belongs to the TRAFAC class translation factor GTPase superfamily. Classic translation factor GTPase family. LepA subfamily.

Its subcellular location is the mitochondrion inner membrane. The enzyme catalyses GTP + H2O = GDP + phosphate + H(+). Functionally, promotes mitochondrial protein synthesis. May act as a fidelity factor of the translation reaction, by catalyzing a one-codon backward translocation of tRNAs on improperly translocated ribosomes. Binds to mitochondrial ribosomes in a GTP-dependent manner. The chain is Translation factor GUF1, mitochondrial from Ajellomyces capsulatus (strain H143) (Darling's disease fungus).